The chain runs to 345 residues: Phosphoribosylformylglycinamidine cyclo-ligase (345 aa).

Belongs to the AIR synthase family.

It is found in the cytoplasm. It carries out the reaction 2-formamido-N(1)-(5-O-phospho-beta-D-ribosyl)acetamidine + ATP = 5-amino-1-(5-phospho-beta-D-ribosyl)imidazole + ADP + phosphate + H(+). It functions in the pathway purine metabolism; IMP biosynthesis via de novo pathway; 5-amino-1-(5-phospho-D-ribosyl)imidazole from N(2)-formyl-N(1)-(5-phospho-D-ribosyl)glycinamide: step 2/2. The sequence is that of Phosphoribosylformylglycinamidine cyclo-ligase from Shewanella sediminis (strain HAW-EB3).